Reading from the N-terminus, the 307-residue chain is Putative gluconeogenesis factor (307 aa).

Belongs to the gluconeogenesis factor family.

Its subcellular location is the cytoplasm. Functionally, required for morphogenesis under gluconeogenic growth conditions. This is Putative gluconeogenesis factor from Yersinia pestis.